The chain runs to 84 residues: Small ribosomal subunit protein bS18 (84 aa).

It belongs to the bacterial ribosomal protein bS18 family. Part of the 30S ribosomal subunit. Forms a tight heterodimer with protein bS6.

Binds as a heterodimer with protein bS6 to the central domain of the 16S rRNA, where it helps stabilize the platform of the 30S subunit. In Polynucleobacter necessarius subsp. necessarius (strain STIR1), this protein is Small ribosomal subunit protein bS18.